Consider the following 1284-residue polypeptide: A-type inclusion protein A25 homolog (1284 aa).

Residues 340–383 are disordered; that stretch reads KPITNTGIEEPHATGGDKEEQEQQPVKVVQSKPDDGITPYNPFE. Positions 348–357 are enriched in basic and acidic residues; the sequence is EEPHATGGDK. Tandem repeats lie at residues 611–637, 638–665, 666–689, 690–720, 721–751, 752–780, 781–811, 812–842, 843–871, and 872–912. The interval 611-912 is 10 X approximate tandem repeats; sequence VRRELEEERR…DMDQYKREIE (302 aa). A disordered region spans residues 1169-1234; sequence PLTTEDTEPK…PPKPETPQIS (66 aa). The segment covering 1180-1192 has biased composition (low complexity); the sequence is VEVVPPSSDVTEP. Over residues 1211 to 1221 the composition is skewed to polar residues; sequence SEYQTSVSQVA.

This sequence belongs to the poxviridae A25 protein family. Interacts (via N-terminus) with protein A26.

The protein resides in the virion. Structural protein that forms a matrix surrounding the mature virion (MV) through interaction with protein A26. Presence of protein A25 in the virion structurally prevents direct virus-cell fusion mechanism. This is A-type inclusion protein A25 homolog (ATI) from Apodemus sylvaticus (European woodmouse).